The following is a 1040-amino-acid chain: Multidrug resistance protein MdtB (1040 aa).

12 helical membrane-spanning segments follow: residues 25 to 45, 347 to 367, 369 to 389, 396 to 416, 440 to 460, 472 to 492, 537 to 557, 863 to 883, 888 to 908, 911 to 931, 968 to 988, and 998 to 1018; these read LLMVAILLAGIIGYQALPVSA, LMMAIALVVMIIYLFLRNIPA, IIPGVAVPLSLIGTFAVMVFL, LTLMALTIATGFVVDDAIVVI, IGFTIISLTFSLIAVLIPLLF, FAITLAVAILISAVVSLTLTP, WLTLSVALSTLLLSVLLWVFI, LGSTVWLIVAAVVAMYIVLGI, FIHPITILSTLPTAGVGALLA, IAGSELDVIAIIGIILLIGIV, ILMTTLAALLGALPLMLSTGV, and IGMVGGLIVSQVLTLFTTPVI.

Belongs to the resistance-nodulation-cell division (RND) (TC 2.A.6) family. MdtB subfamily. Part of a tripartite efflux system composed of MdtA, MdtB and MdtC. MdtB forms a heteromultimer with MdtC.

Its subcellular location is the cell inner membrane. The MdtABC tripartite complex confers resistance against novobiocin and deoxycholate. This Escherichia coli O127:H6 (strain E2348/69 / EPEC) protein is Multidrug resistance protein MdtB.